The primary structure comprises 805 residues: Serine/threonine-protein kinase fused (805 aa).

The Protein kinase domain maps to tyrosine 4 to valine 254. Residues valine 10–valine 18 and lysine 33 each bind ATP. Aspartate 125 serves as the catalytic Proton acceptor. The segment at lysine 269–glutamate 289 is disordered. Residues alanine 278–aspartate 287 show a composition bias toward basic and acidic residues. Phosphoserine is present on residues serine 422 and serine 429. Residues isoleucine 447–glutamate 456 show a composition bias toward basic and acidic residues. The tract at residues isoleucine 447–threonine 496 is disordered.

The protein belongs to the protein kinase superfamily. Ser/Thr protein kinase family. In terms of tissue distribution, expressed in all imaginal disks, higher level in wing disk.

It catalyses the reaction L-seryl-[protein] + ATP = O-phospho-L-seryl-[protein] + ADP + H(+). It carries out the reaction L-threonyl-[protein] + ATP = O-phospho-L-threonyl-[protein] + ADP + H(+). In terms of biological role, probable serine/threonine-protein kinase; maternally required for correct patterning in the posterior part of each embryonic metamere. May be involved in control of cell division during metamorphosis and ovarian development. May interact with costal-2. The chain is Serine/threonine-protein kinase fused (fu) from Drosophila melanogaster (Fruit fly).